Consider the following 235-residue polypeptide: Sugar fermentation stimulation protein homolog (235 aa).

The protein belongs to the SfsA family.

The sequence is that of Sugar fermentation stimulation protein homolog from Pseudomonas aeruginosa (strain LESB58).